The sequence spans 358 residues: Methylthioribose-1-phosphate isomerase (358 aa).

Residues 54-56 (RGA), Arg96, and Gln205 each bind substrate. Asp246 functions as the Proton donor in the catalytic mechanism. Residue 256–257 (NK) coordinates substrate.

The protein belongs to the eIF-2B alpha/beta/delta subunits family. MtnA subfamily.

The enzyme catalyses 5-(methylsulfanyl)-alpha-D-ribose 1-phosphate = 5-(methylsulfanyl)-D-ribulose 1-phosphate. Its pathway is amino-acid biosynthesis; L-methionine biosynthesis via salvage pathway; L-methionine from S-methyl-5-thio-alpha-D-ribose 1-phosphate: step 1/6. Functionally, catalyzes the interconversion of methylthioribose-1-phosphate (MTR-1-P) into methylthioribulose-1-phosphate (MTRu-1-P). In Pseudomonas syringae pv. syringae (strain B728a), this protein is Methylthioribose-1-phosphate isomerase.